The primary structure comprises 123 residues: Holo-[acyl-carrier-protein] synthase (123 aa).

Residues Asp7 and Glu56 each contribute to the Mg(2+) site.

Belongs to the P-Pant transferase superfamily. AcpS family. The cofactor is Mg(2+).

The protein localises to the cytoplasm. It carries out the reaction apo-[ACP] + CoA = holo-[ACP] + adenosine 3',5'-bisphosphate + H(+). Its function is as follows. Transfers the 4'-phosphopantetheine moiety from coenzyme A to a Ser of acyl-carrier-protein. The chain is Holo-[acyl-carrier-protein] synthase from Carboxydothermus hydrogenoformans (strain ATCC BAA-161 / DSM 6008 / Z-2901).